A 641-amino-acid polypeptide reads, in one-letter code: Bilirubin reductase (641 aa).

Gln96 contributes to the FMN binding site. Arg167 acts as the Proton donor in catalysis. Residues Lys214, Arg295, and 317–318 (GR) contribute to the FMN site. [4Fe-4S] cluster-binding residues include Cys341, Cys344, Cys348, and Cys360. FAD is bound by residues Ala391, Glu410, Gln418, Lys428, and Ala455.

It in the N-terminal section; belongs to the NADH:flavin oxidoreductase/NADH oxidase family. The cofactor is FAD. It depends on FMN as a cofactor. [4Fe-4S] cluster is required as a cofactor.

It catalyses the reaction urobilinogen + 4 A = (4Z,15Z)-bilirubin IXalpha + 4 AH2. The catalysed reaction is urobilinogen + 2 A = (4Z,15Z)-mesobilirubin IXalpha + 2 AH2. It participates in porphyrin-containing compound metabolism; protoheme degradation. Bilirubin reductase that catalyzes reduction of mesobilirubin and/or bilirubin to urobilinogen, a key step during heme degradation. Urobilinogen then spontaneously degrades into urobilin, which gives urine its distinctive yellow color. The polypeptide is Bilirubin reductase (Mediterraneibacter gnavus (strain CC55_001C)).